We begin with the raw amino-acid sequence, 31 residues long: U8-ctenitoxin-Co1a (31 aa).

Intrachain disulfides connect cysteine 4–cysteine 18 and cysteine 11–cysteine 24.

As to expression, expressed by the venom gland.

Its subcellular location is the secreted. Functionally, blocks voltage-gated sodium channels (Nav). This is U8-ctenitoxin-Co1a from Ctenus ornatus (Brazilian spider).